The sequence spans 254 residues: Proteasome activator complex subunit 3 (254 aa).

N6-acetyllysine occurs at positions 6 and 14. Lysine 195 is modified (N6-acetyllysine; by P300/CBP).

In terms of assembly, homoheptamer. Acetylation at the major site Lys-195 is important for oligomerization and ability to degrade its target substrates. Deacetylated by SIRT1.

Implicated in immunoproteasome assembly and required for efficient antigen processing. The PA28 activator complex enhances the generation of class I binding peptides by altering the cleavage pattern of the proteasome. The chain is Proteasome activator complex subunit 3 from Gallus gallus (Chicken).